The primary structure comprises 441 residues: Coiled-coil domain-containing protein 91 (441 aa).

The tract at residues 1-16 is GGA1-binding motif; it reads MDDDDFGGFEAAETFD. Positions 1 to 26 are disordered; that stretch reads MDDDDFGGFEAAETFDGGSGETQTTS. Residues serine 43 and serine 46 each carry the phosphoserine modification. 2 coiled-coil regions span residues 130–209 and 249–407; these read SNIQ…GHEA and ELLN…KRLD. Residues 210-413 form a homodimerization region; sequence LSIIVDEYKA…KRLDQVIRQR (204 aa).

In terms of assembly, homodimer. Interacts with GGA1, GGA2 and AP1G1. As to expression, widely expressed.

Its subcellular location is the membrane. The protein localises to the golgi apparatus. It is found in the trans-Golgi network membrane. The protein resides in the trans-Golgi network. Functionally, involved in the regulation of membrane traffic through the trans-Golgi network (TGN). Functions in close cooperation with the GGAs in the sorting of hydrolases to lysosomes. This is Coiled-coil domain-containing protein 91 (CCDC91) from Homo sapiens (Human).